A 281-amino-acid chain; its full sequence is Probable thioesterase gloN (281 aa).

Residues 207–233 (LDDGSNNSRDLNETSPTETSNDSETQA) are disordered. Polar residues predominate over residues 210-232 (GSNNSRDLNETSPTETSNDSETQ).

This sequence belongs to the AMT4 thioesterase family.

The protein operates within mycotoxin biosynthesis. Probable thioesterase; part of the gene cluster that mediates the biosynthesis of pneumocandins, lipohexapeptides of the echinocandin family that prevent fungal cell wall formation by non-competitive inhibition of beta-1,3-glucan synthase. The 10,12-dimethylmyristoyl side chain is synthesized by the reducing polyketide synthase gloL/GLPKS4. The thioesterase gloN/GLHYD exclusively interacts with gloL/GLPKS4 to maintain turnover of the polyketide side chain. The 10R,12S-dimethylmyristic acid is then transferred to the first thiolation domain of the nonribosomal peptide synthetase gloA/GLNRPS4 by the acyl-AMP ligase gloD/GLligase, followed by its acylation to L-ornithine to trigger elongation of the cyclic hexapeptide. L-ornithine, 4R-hydroxyl-L-proline (generated from L-proline by the dioxygenase gloF/GLOXY2), 3S-hydroxyl-L-homotyrosine (generated by gloG/GLHtyB, gloH/GLHtyA, gloI/GLHtyC, gloJ/GLHtyD and hydroxylated at C-3 by the dioxygenase gloM/GLOXY1), 3R-hydroxyl-L-glutamine (generated from L-glutamine probably by the dioxygenase gloE/GLOXY3) and 3S-hydroxyl-L-proline (generated from L-proline by the dioxygenase gloF/GLOXY2 to yield pneumocandin B0), or 3S-hydroxyl-4S-methyl-L-proline (generated from L-leucine by the dioxygenase gloC/GLOXY4 to yield pneumocandin A0) are sequentially added to the growing chain. The last C domain of gloA/GLNRPS4 is proposed to be responsible for cyclization by condensation to form the peptide bond between L-ornithine and 3S-hydroxyl-4S-methyl-L-proline (for pneumocandin A0) or 3S-hydroxyl-L-proline (for pneumocandin B0). Finally, the subsequent C-4 hydroxylation of 3S-hydroxyl-L-homotyrosine and L-ornithine dihydroxylation at C-4 and C-5 are performed by the cytochrome P450 monooxygenases gloP/GLP450-1 and gloO/GLP450-2, respectively. This chain is Probable thioesterase gloN, found in Glarea lozoyensis (strain ATCC 20868 / MF5171).